A 552-amino-acid polypeptide reads, in one-letter code: Chaperonin GroEL (552 aa).

Residues 29 to 32 (TAGP), Lys-50, 86 to 90 (DGTTT), Gly-420, and Asp-501 contribute to the ATP site.

Belongs to the chaperonin (HSP60) family. As to quaternary structure, forms a cylinder of 14 subunits composed of two heptameric rings stacked back-to-back. Interacts with the co-chaperonin GroES.

It is found in the cytoplasm. The catalysed reaction is ATP + H2O + a folded polypeptide = ADP + phosphate + an unfolded polypeptide.. Together with its co-chaperonin GroES, plays an essential role in assisting protein folding. The GroEL-GroES system forms a nano-cage that allows encapsulation of the non-native substrate proteins and provides a physical environment optimized to promote and accelerate protein folding. This chain is Chaperonin GroEL, found in Wolbachia pipientis subsp. Culex pipiens (strain wPip).